We begin with the raw amino-acid sequence, 407 residues long: Imidazolonepropionase (407 aa).

Positions 68 and 70 each coordinate Fe(3+). 2 residues coordinate Zn(2+): His-68 and His-70. 4-imidazolone-5-propanoate is bound by residues Arg-77, Tyr-140, and His-173. An N-formimidoyl-L-glutamate-binding site is contributed by Tyr-140. His-238 serves as a coordination point for Fe(3+). His-238 is a binding site for Zn(2+). Gln-241 is a 4-imidazolone-5-propanoate binding site. Asp-313 lines the Fe(3+) pocket. Asp-313 is a binding site for Zn(2+). Residues Asn-315 and Gly-317 each coordinate N-formimidoyl-L-glutamate. Thr-318 contacts 4-imidazolone-5-propanoate.

This sequence belongs to the metallo-dependent hydrolases superfamily. HutI family. It depends on Zn(2+) as a cofactor. Fe(3+) is required as a cofactor.

It is found in the cytoplasm. It carries out the reaction 4-imidazolone-5-propanoate + H2O = N-formimidoyl-L-glutamate. Its pathway is amino-acid degradation; L-histidine degradation into L-glutamate; N-formimidoyl-L-glutamate from L-histidine: step 3/3. Its function is as follows. Catalyzes the hydrolytic cleavage of the carbon-nitrogen bond in imidazolone-5-propanoate to yield N-formimidoyl-L-glutamate. It is the third step in the universal histidine degradation pathway. In Burkholderia pseudomallei (strain 1710b), this protein is Imidazolonepropionase.